The chain runs to 411 residues: MTAQTPIHVYSEIGKLKKVLLHRPGKEIENLMPDYLERLLFDDIPFLEDAQKEHDAFAQALRDEGIEVLYLETLAAESLVTPEIREAFIDEYLSEANIRGRATKKAIRELLMAIEDNQELIEKTMAGVQKSELPEIPASEKGLTDLVESSYPFAIDPMPNLYFTRDPFATIGTGVSLNHMFSETRNRETLYGKYIFTHHPIYGGGKVPMVYDRNETTRIEGGDELVLSKDVLAVGISQRTDAASIEKLLVNIFKQNLGFKKVLAFEFANNRKFMHLDTVFTMVDYDKFTIHPEIEGDLRVYSVTYDNEELHIVEEKGDLADLLAANLGVEKVDLIRCGGDNLVAAGREQWNDGSNTLTIAPGVVVVYNRNTITNAILESKGLKLIKIHGSELVRGRGGPRCMSMPFEREDI.

Cys-401 (amidino-cysteine intermediate) is an active-site residue.

It belongs to the arginine deiminase family. Glycosylated.

It localises to the cytoplasm. The enzyme catalyses L-arginine + H2O = L-citrulline + NH4(+). The protein operates within amino-acid degradation; L-arginine degradation via ADI pathway; carbamoyl phosphate from L-arginine: step 1/2. The sequence is that of Arginine deiminase from Streptococcus pyogenes serotype M3 (strain ATCC BAA-595 / MGAS315).